The chain runs to 1017 residues: Protein HIRA (1017 aa).

WD repeat units follow at residues 11–53 (HNGK…QEDD) and 68–107 (NHLA…GPST). Ser111 is subject to Phosphoserine. WD repeat units follow at residues 129–168 (NHSG…EILA), 172–211 (GHSG…LETS), 220–263 (GGTT…TNMD), 266–322 (GHRK…PLVV), and 326–367 (LFDK…DPLS). Positions 421-479 (REMGSATSVAGVVNGESLEDIRKNLLKKQVETRTADGRRRITPLCIAQLDTGDFSTAFF) are interaction with ASF1A. Residues 421 to 729 (REMGSATSVA…RLKCNREGKE (309 aa)) are interaction with CCNA1. The tract at residues 439 to 475 (EDIRKNLLKKQVETRTADGRRRITPLCIAQLDTGDFS) is required for repression of histone gene transcription. Over residues 494 to 509 (SSHSSPQLLPLDSSTP) the composition is skewed to low complexity. The interval 494–555 (SSHSSPQLLP…AALSPSVLTT (62 aa)) is disordered. Residues 536–555 (KDSMNATSTPAALSPSVLTT) are compositionally biased toward polar residues. Phosphoserine is present on Ser549. Thr555 is modified (phosphothreonine; by CDK2). Position 557 is a phosphoserine (Ser557). 2 disordered regions span residues 570 to 589 (TERS…TPTA) and 604 to 625 (PRDL…KASS). Thr576 carries the phosphothreonine modification. Residue Ser584 is modified to Phosphoserine. Thr586 bears the Phosphothreonine mark. Residues 593–826 (LKEQNLVKEL…LAGSDMTVSQ (234 aa)) form an interaction with histone H2B region. Interaction with PAX3 stretches follow at residues 594 to 739 (KEQN…SRIL) and 740 to 828 (TAAG…SQIL). The segment covering 604 to 619 (PRDLLESSSDSDEKVP) has biased composition (basic and acidic residues). Phosphoserine is present on residues Ser610, Ser611, Ser612, Ser614, Ser661, Ser675, and Ser687. An interaction with histone H4 region spans residues 738 to 1017 (ILTAAGSCDV…QEQLDILRDK (280 aa)).

Belongs to the WD repeat HIR1 family. In terms of assembly, interacts with histone H3-3B, PAX3 and PAX7. Interacts with histone H3.Y. Interacts with CCNA1, HIRIP3, NFU1/HIRIP5 and histone H2B. Part of a complex which includes ASF1A, CABIN1, histone H3.3, histone H4 and UBN1. In terms of processing, sumoylated. Phosphorylated by CDK2/CCNA1 and CDK2/CCNE1 on Thr-555 in vitro. Also phosphorylated on Thr-555 and Ser-687 in vivo. In terms of tissue distribution, expressed at high levels in kidney, pancreas and skeletal muscle and at lower levels in brain, heart, liver, lung, and placenta.

The protein resides in the nucleus. It is found in the PML body. Its function is as follows. Cooperates with ASF1A to promote replication-independent chromatin assembly. Required for the periodic repression of histone gene transcription during the cell cycle. Required for the formation of senescence-associated heterochromatin foci (SAHF) and efficient senescence-associated cell cycle exit. In Homo sapiens (Human), this protein is Protein HIRA (HIRA).